The following is a 550-amino-acid chain: Formate--tetrahydrofolate ligase (550 aa).

Residue 62–69 (TPAGEGKS) participates in ATP binding.

Belongs to the formate--tetrahydrofolate ligase family.

It carries out the reaction (6S)-5,6,7,8-tetrahydrofolate + formate + ATP = (6R)-10-formyltetrahydrofolate + ADP + phosphate. It functions in the pathway one-carbon metabolism; tetrahydrofolate interconversion. The polypeptide is Formate--tetrahydrofolate ligase (Corynebacterium diphtheriae (strain ATCC 700971 / NCTC 13129 / Biotype gravis)).